The sequence spans 741 residues: Ribosome-releasing factor 2, mitochondrial (741 aa).

Residues Met-1–Tyr-29 constitute a mitochondrion transit peptide. In terms of domain architecture, tr-type G spans Ser-31–Glu-310. Residues Ala-40–Thr-47, Asp-104–His-108, and Asn-158–Asp-161 each bind GTP.

It belongs to the TRAFAC class translation factor GTPase superfamily. Classic translation factor GTPase family. EF-G/EF-2 subfamily.

Its subcellular location is the mitochondrion. Mitochondrial GTPase that mediates the disassembly of ribosomes from messenger RNA at the termination of mitochondrial protein biosynthesis. Not involved in the GTP-dependent ribosomal translocation step during translation elongation. The chain is Ribosome-releasing factor 2, mitochondrial from Drosophila ananassae (Fruit fly).